The following is a 400-amino-acid chain: Telomere repeat-binding protein 6 (400 aa).

The region spanning 173–252 (VKFGIKSLNI…DDENLGSLGF (80 aa)) is the Ubiquitin-like domain. The 60-residue stretch at 310-369 (VQRRIRRPFTVSEVEALVQAVERLGTGRWRDVKSHAFNHVNHRTYVDLKDKWKTLVHTAK) folds into the HTH myb-type domain. Positions 338–365 (WRDVKSHAFNHVNHRTYVDLKDKWKTLV) form a DNA-binding region, H-T-H motif.

As to quaternary structure, homodimer. Expressed ubiquitously.

The protein resides in the nucleus. In terms of biological role, binds specifically to the plant telomeric double-stranded DNA sequences. At least 4 repeats of telomeric sequences are required for binding. The protein is Telomere repeat-binding protein 6 (TRP6) of Arabidopsis thaliana (Mouse-ear cress).